A 599-amino-acid chain; its full sequence is MSTLFLRTLREDPADADVDSAKLLQRAGYIRKAAPGIWTWLPLGLAVLNKIEDVIREEINGIGAQEVHFPALLPREPYEATHRWEEYGDNIFRLKDRHEADYLLAPTHEEMFTLLVKDMYSSYKDLPVTLYQIQTKYRDEFRPRAGLIRGREFIMKDAYSFTVDEEGMRQAYMDERGAYERIFQRLDLKYVPVFAMSGPMGGSASEEFLAPMPIGEDTFALAPSGKAWNVEALHTPAVEAVDCSQTPDATKRATPNARTIDEMIAFANAEYPREDGRDWQASDILKNVVIAVKHAEDDEHDEPWRELVVVGIPGDRTIDMKRLEAQFAPAELEEATEDDLKAHPELVRGYIGPMGFGPQARGDDGTAETLRYLIDAHVAEGSAWFTGADEEGVDYYDLVYGRDFKADDVVEAVQVRDGDMSPDGSGPLSFERGVEIGQVFQLGLKYSEALDLKVLNQNGKTVPVWMGCYGIGVSRVLACIAETHHDDKGLAWPMNIAPAQVHVMATGKDEAAFEAAERLVDELSANGIEVLYDDRRKVSPGVKFKDAELIGVPIIAVAGRDTVNNGTIEVRDRDGSNSENISVDSVAQVIVDRVHEALK.

Belongs to the class-II aminoacyl-tRNA synthetase family. ProS type 1 subfamily. As to quaternary structure, homodimer.

It is found in the cytoplasm. It carries out the reaction tRNA(Pro) + L-proline + ATP = L-prolyl-tRNA(Pro) + AMP + diphosphate. Its function is as follows. Catalyzes the attachment of proline to tRNA(Pro) in a two-step reaction: proline is first activated by ATP to form Pro-AMP and then transferred to the acceptor end of tRNA(Pro). As ProRS can inadvertently accommodate and process non-cognate amino acids such as alanine and cysteine, to avoid such errors it has two additional distinct editing activities against alanine. One activity is designated as 'pretransfer' editing and involves the tRNA(Pro)-independent hydrolysis of activated Ala-AMP. The other activity is designated 'posttransfer' editing and involves deacylation of mischarged Ala-tRNA(Pro). The misacylated Cys-tRNA(Pro) is not edited by ProRS. This chain is Proline--tRNA ligase, found in Bifidobacterium animalis subsp. lactis (strain AD011).